A 341-amino-acid polypeptide reads, in one-letter code: 5-formaminoimidazole-4-carboxamide-1-(beta)-D-ribofuranosyl 5'-monophosphate synthetase (341 aa).

Residues H27 and S92 each contribute to the 5-amino-1-(5-phospho-beta-D-ribosyl)imidazole-4-carboxamide site. The 216-residue stretch at 113-328 folds into the ATP-grasp domain; sequence RELLRWEADQ…MGERIAHEIK (216 aa). ATP is bound by residues 143–195 and E217; that span reads AEEV…VPAY. 5-amino-1-(5-phospho-beta-D-ribosyl)imidazole-4-carboxamide is bound at residue N237. Residues E276 and E289 each contribute to the Mg(2+) site.

Belongs to the phosphohexose mutase family. Mg(2+) serves as cofactor. The cofactor is Mn(2+).

The catalysed reaction is 5-amino-1-(5-phospho-beta-D-ribosyl)imidazole-4-carboxamide + formate + ATP = 5-formamido-1-(5-phospho-D-ribosyl)imidazole-4-carboxamide + ADP + phosphate. Its pathway is purine metabolism; IMP biosynthesis via de novo pathway; 5-formamido-1-(5-phospho-D-ribosyl)imidazole-4-carboxamide from 5-amino-1-(5-phospho-D-ribosyl)imidazole-4-carboxamide (formate route): step 1/1. Its function is as follows. Catalyzes the ATP- and formate-dependent formylation of 5-aminoimidazole-4-carboxamide-1-beta-d-ribofuranosyl 5'-monophosphate (AICAR) to 5-formaminoimidazole-4-carboxamide-1-beta-d-ribofuranosyl 5'-monophosphate (FAICAR) in the absence of folates. The sequence is that of 5-formaminoimidazole-4-carboxamide-1-(beta)-D-ribofuranosyl 5'-monophosphate synthetase from Pyrobaculum aerophilum (strain ATCC 51768 / DSM 7523 / JCM 9630 / CIP 104966 / NBRC 100827 / IM2).